Reading from the N-terminus, the 62-residue chain is Conotoxin Im5.1 (62 aa).

The first 19 residues, 1 to 19, serve as a signal peptide directing secretion; it reads MYCLPVFIILLLLISSAPS. Positions 20–48 are excised as a propeptide; it reads TPPQPRNKDRVHLISLLDNHKQILQRDWN. Residue Trp60 is modified to Tryptophan amide.

Belongs to the conotoxin T superfamily. In terms of processing, contains 2 disulfide bonds that can be either 'C1-C3, C2-C4' or 'C1-C4, C2-C3', since these disulfide connectivities have been observed for conotoxins with cysteine framework V (for examples, see AC P0DQQ7 and AC P81755). In terms of tissue distribution, expressed by the venom duct.

It is found in the secreted. In Conus imperialis (Imperial cone), this protein is Conotoxin Im5.1.